The chain runs to 553 residues: Chaperonin GroEL (553 aa).

Residues 30–33 (TLGP), K51, 87–91 (DGTTT), G416, and D496 contribute to the ATP site.

The protein belongs to the chaperonin (HSP60) family. As to quaternary structure, forms a cylinder of 14 subunits composed of two heptameric rings stacked back-to-back. Interacts with the co-chaperonin GroES.

Its subcellular location is the cytoplasm. It carries out the reaction ATP + H2O + a folded polypeptide = ADP + phosphate + an unfolded polypeptide.. Its function is as follows. Together with its co-chaperonin GroES, plays an essential role in assisting protein folding. The GroEL-GroES system forms a nano-cage that allows encapsulation of the non-native substrate proteins and provides a physical environment optimized to promote and accelerate protein folding. This is Chaperonin GroEL from Alkalilimnicola ehrlichii (strain ATCC BAA-1101 / DSM 17681 / MLHE-1).